The primary structure comprises 145 residues: Histone H2B.10 (145 aa).

A compositionally biased stretch (basic and acidic residues) spans 1-15; it reads MAKADKKPAEKKPAE. Positions 1-53 are disordered; the sequence is MAKADKKPAEKKPAEKTPAAEPAAAAEKKPKAGKKLPKEPAGAGDKKKKRSKK. Position 3 is an N6-methyllysine (Lys-3). 2 positions are modified to N6-acetyllysine: Lys-6 and Lys-11. Lys-12 is subject to N6,N6-dimethyllysine. Residues Lys-16, Lys-28, and Lys-34 each carry the N6-acetyllysine modification. Positions 16-25 are enriched in low complexity; the sequence is KTPAAEPAAA. The residue at position 35 (Lys-35) is an N6-acetyllysine; partial. A Glycyl lysine isopeptide (Lys-Gly) (interchain with G-Cter in ubiquitin) cross-link involves residue Lys-141.

The protein belongs to the histone H2B family. As to quaternary structure, the nucleosome is a histone octamer containing two molecules each of H2A, H2B, H3 and H4 assembled in one H3-H4 heterotetramer and two H2A-H2B heterodimers. The octamer wraps approximately 147 bp of DNA. Interacts with ORTH2. Can be acetylated to form H2BK5ac, H2BK10ac, H2BK15ac, H2BK27ac, H2BK33ac and H2BK34ac. Post-translationally, dimethylated to form H2BK11me2. In terms of processing, monoubiquitinated by BRE1 to form H2BK143ub1 and deubiquitinated by UBP26. Required for heterochromatic histone H3 di- and trimethylation at H3K4me. May give a specific tag for epigenetic transcriptional activation.

The protein resides in the nucleus. Its subcellular location is the chromosome. Core component of nucleosome. Nucleosomes wrap and compact DNA into chromatin, limiting DNA accessibility to the cellular machineries which require DNA as a template. Histones thereby play a central role in transcription regulation, DNA repair, DNA replication and chromosomal stability. DNA accessibility is regulated via a complex set of post-translational modifications of histones, also called histone code, and nucleosome remodeling. In Arabidopsis thaliana (Mouse-ear cress), this protein is Histone H2B.10.